Reading from the N-terminus, the 504-residue chain is MEFEAVRISPGKYRGDALLVGLFQDGPEPALALAALDAAVAAVVLEVISEEEFKPKSRQKLTVRVGGDTGLRKVVLVGLGEQAKYKPESLRQCIGEGARTLKAIKATTAGVWVPPLGEGGEEATVEALVEAIRLALHEDRRFRSKKSDSEENGNSNNGGENKLTKVSLVVAGEGDYAAAVRRGNILAEGTIFARELVSAPANYVTSVTLAEQATAIAEANGLECEILEKEDCERLGMGAYLGVAQGTDLPPKFIHLTYKPAHSAPRKRIAIIGKGITFDSGGLSIKPAKGMELMKVDMGGAAAALGAAKVLGQLKPDIEVHFIVAATENMVSGHAIHPGDILTASNGKTIEVDNTDAEGRLTLADALVFSEKLGVDAIVDLATLTGACVVALGNDIAGLLTENEELARQIRAAGEASGEKFWQLPMEESYFEGMKSVVADMRNTGSREGGTITAALFLKQFVEKTPWVHLDIAGPVWTEKQKGYTNRGGTGFGVRTLVRFVLAQ.

Positions 274 and 279 each coordinate Mn(2+). The active site involves Lys-286. Mn(2+)-binding residues include Asp-297, Asp-356, and Glu-358. Arg-360 is a catalytic residue.

Belongs to the peptidase M17 family. Requires Mn(2+) as cofactor.

Its subcellular location is the cytoplasm. The enzyme catalyses Release of an N-terminal amino acid, Xaa-|-Yaa-, in which Xaa is preferably Leu, but may be other amino acids including Pro although not Arg or Lys, and Yaa may be Pro. Amino acid amides and methyl esters are also readily hydrolyzed, but rates on arylamides are exceedingly low.. The catalysed reaction is Release of an N-terminal amino acid, preferentially leucine, but not glutamic or aspartic acids.. Its function is as follows. Presumably involved in the processing and regular turnover of intracellular proteins. Catalyzes the removal of unsubstituted N-terminal amino acids from various peptides. This chain is Probable cytosol aminopeptidase, found in Gloeobacter violaceus (strain ATCC 29082 / PCC 7421).